The chain runs to 403 residues: Phosphopentomutase (403 aa).

The Mn(2+) site is built by aspartate 13, aspartate 298, histidine 303, aspartate 339, histidine 340, and histidine 351.

Belongs to the phosphopentomutase family. Mn(2+) is required as a cofactor.

It is found in the cytoplasm. The enzyme catalyses 2-deoxy-alpha-D-ribose 1-phosphate = 2-deoxy-D-ribose 5-phosphate. It catalyses the reaction alpha-D-ribose 1-phosphate = D-ribose 5-phosphate. Its pathway is carbohydrate degradation; 2-deoxy-D-ribose 1-phosphate degradation; D-glyceraldehyde 3-phosphate and acetaldehyde from 2-deoxy-alpha-D-ribose 1-phosphate: step 1/2. Functionally, isomerase that catalyzes the conversion of deoxy-ribose 1-phosphate (dRib-1-P) and ribose 1-phosphate (Rib-1-P) to deoxy-ribose 5-phosphate (dRib-5-P) and ribose 5-phosphate (Rib-5-P), respectively. The protein is Phosphopentomutase of Streptococcus thermophilus (strain ATCC BAA-491 / LMD-9).